A 285-amino-acid chain; its full sequence is Cyclin-Y-like protein 1B (285 aa).

The Cyclin N-terminal domain maps to 111–209 (PKRNCIFRHF…CFLELLEFNI (99 aa)).

This sequence belongs to the cyclin family. Cyclin Y subfamily.

The polypeptide is Cyclin-Y-like protein 1B (Homo sapiens (Human)).